The sequence spans 424 residues: GTPase Obg (424 aa).

The Obg domain maps to 1 to 158 (MFVDRARIYI…LWVILELKLL (158 aa)). The OBG-type G domain occupies 159–330 (ADVGLIGFPN…LIYYAAQKLK (172 aa)). GTP contacts are provided by residues 165-172 (GFPNVGKS), 190-194 (FTTIN), 212-215 (DIPG), 282-285 (NKMD), and 311-313 (SAA). The Mg(2+) site is built by Ser172 and Thr192. The region spanning 347-424 (YTAVEEEPFN…MYDLEFEYFR (78 aa)) is the OCT domain.

The protein belongs to the TRAFAC class OBG-HflX-like GTPase superfamily. OBG GTPase family. As to quaternary structure, monomer. Mg(2+) serves as cofactor.

Its subcellular location is the cytoplasm. In terms of biological role, an essential GTPase which binds GTP, GDP and possibly (p)ppGpp with moderate affinity, with high nucleotide exchange rates and a fairly low GTP hydrolysis rate. Plays a role in control of the cell cycle, stress response, ribosome biogenesis and in those bacteria that undergo differentiation, in morphogenesis control. The polypeptide is GTPase Obg (Acetivibrio thermocellus (strain ATCC 27405 / DSM 1237 / JCM 9322 / NBRC 103400 / NCIMB 10682 / NRRL B-4536 / VPI 7372) (Clostridium thermocellum)).